A 291-amino-acid polypeptide reads, in one-letter code: tRNA pseudouridine synthase-like 1 (291 aa).

Asp66 acts as the Nucleophile in catalysis. Tyr130 is a binding site for substrate.

It belongs to the tRNA pseudouridine synthase TruA family.

It carries out the reaction a uridine in tRNA = a pseudouridine in tRNA. This chain is tRNA pseudouridine synthase-like 1 (Pusl1), found in Mus musculus (Mouse).